Reading from the N-terminus, the 444-residue chain is Adiponectin receptor protein (444 aa).

Residues methionine 1 to serine 13 are compositionally biased toward polar residues. The interval methionine 1–alanine 24 is disordered. The Cytoplasmic portion of the chain corresponds to methionine 1–threonine 204. Residues glycine 205–isoleucine 225 form a helical membrane-spanning segment. The Extracellular portion of the chain corresponds to serine 226–lysine 237. Residues isoleucine 238–histidine 258 form a helical membrane-spanning segment. Zn(2+) is bound at residue histidine 258. At threonine 259–tyrosine 276 the chain is on the cytoplasmic side. A helical membrane pass occupies residues cysteine 277–cysteine 297. The Extracellular segment spans residues histidine 298–lysine 302. A helical transmembrane segment spans residues valine 303–aspartate 323. Over lysine 324–arginine 334 the chain is Cytoplasmic. The chain crosses the membrane as a helical span at residues alanine 335 to methionine 355. Residues glutamate 356 to alanine 365 are Extracellular-facing. The helical transmembrane segment at serine 366–leucine 386 threads the bilayer. The Cytoplasmic segment spans residues arginine 387 to glutamine 405. The Zn(2+) site is built by histidine 404 and histidine 408. A helical membrane pass occupies residues isoleucine 406 to alanine 426. Residues methionine 427–phenylalanine 444 are Extracellular-facing.

The protein belongs to the ADIPOR family. In terms of tissue distribution, in larval and adult brain, expressed in insulin-producing cells and in neurons of the subesophageal region. Also expressed in lateral neurons of the adult brain (at protein level). In third instar larvae, expressed in central nervous system (CNS), imaginal disk, salivary gland, fat body, gut and malphigian tubules.

Its subcellular location is the cell membrane. Adiponectin receptor. In insulin-producing cells, regulates insulin secretion and controls glucose and lipid metabolism. The protein is Adiponectin receptor protein (AdipoR) of Drosophila melanogaster (Fruit fly).